Reading from the N-terminus, the 569-residue chain is Proline--tRNA ligase (569 aa).

This sequence belongs to the class-II aminoacyl-tRNA synthetase family. ProS type 1 subfamily. In terms of assembly, homodimer.

It is found in the cytoplasm. The catalysed reaction is tRNA(Pro) + L-proline + ATP = L-prolyl-tRNA(Pro) + AMP + diphosphate. In terms of biological role, catalyzes the attachment of proline to tRNA(Pro) in a two-step reaction: proline is first activated by ATP to form Pro-AMP and then transferred to the acceptor end of tRNA(Pro). As ProRS can inadvertently accommodate and process non-cognate amino acids such as alanine and cysteine, to avoid such errors it has two additional distinct editing activities against alanine. One activity is designated as 'pretransfer' editing and involves the tRNA(Pro)-independent hydrolysis of activated Ala-AMP. The other activity is designated 'posttransfer' editing and involves deacylation of mischarged Ala-tRNA(Pro). The misacylated Cys-tRNA(Pro) is not edited by ProRS. In Nitratiruptor sp. (strain SB155-2), this protein is Proline--tRNA ligase.